The chain runs to 414 residues: Carboxynorspermidine synthase (414 aa).

This sequence belongs to the saccharopine dehydrogenase family. Carboxynorspermidine synthase subfamily.

The catalysed reaction is carboxynorspermidine + NADP(+) + H2O = L-aspartate 4-semialdehyde + propane-1,3-diamine + NADPH + H(+). The enzyme catalyses carboxyspermidine + NADP(+) + H2O = L-aspartate 4-semialdehyde + putrescine + NADPH + H(+). Involved in norspermidine biosynthesis. Catalyzes the synthesis of carboxynorspermidine from L-aspartate 4-semialdehyde and 1,3-diaminopropane. Is also active with putrescine as a substrate. Essential for biofilm formation. The polypeptide is Carboxynorspermidine synthase (Vibrio cholerae serotype O1 (strain ATCC 39315 / El Tor Inaba N16961)).